Here is a 288-residue protein sequence, read N- to C-terminus: ATP synthase gamma chain (288 aa).

This sequence belongs to the ATPase gamma chain family. In terms of assembly, F-type ATPases have 2 components, CF(1) - the catalytic core - and CF(0) - the membrane proton channel. CF(1) has five subunits: alpha(3), beta(3), gamma(1), delta(1), epsilon(1). CF(0) has three main subunits: a, b and c.

Its subcellular location is the cell membrane. In terms of biological role, produces ATP from ADP in the presence of a proton gradient across the membrane. The gamma chain is believed to be important in regulating ATPase activity and the flow of protons through the CF(0) complex. The chain is ATP synthase gamma chain from Staphylococcus epidermidis (strain ATCC 35984 / DSM 28319 / BCRC 17069 / CCUG 31568 / BM 3577 / RP62A).